The primary structure comprises 79 residues: Translational regulator CsrA (79 aa).

Belongs to the CsrA/RsmA family. Homodimer; the beta-strands of each monomer intercalate to form a hydrophobic core, while the alpha-helices form wings that extend away from the core.

The protein resides in the cytoplasm. Its function is as follows. A translational regulator that binds mRNA to regulate translation initiation and/or mRNA stability. Usually binds in the 5'-UTR at or near the Shine-Dalgarno sequence preventing ribosome-binding, thus repressing translation. Its main target seems to be the major flagellin gene, while its function is anatagonized by FliW. The protein is Translational regulator CsrA of Maridesulfovibrio salexigens (strain ATCC 14822 / DSM 2638 / NCIMB 8403 / VKM B-1763) (Desulfovibrio salexigens).